Consider the following 107-residue polypeptide: Large ribosomal subunit protein uL24 (107 aa).

It belongs to the universal ribosomal protein uL24 family. In terms of assembly, part of the 50S ribosomal subunit.

One of two assembly initiator proteins, it binds directly to the 5'-end of the 23S rRNA, where it nucleates assembly of the 50S subunit. Functionally, one of the proteins that surrounds the polypeptide exit tunnel on the outside of the subunit. This Neisseria meningitidis serogroup C (strain 053442) protein is Large ribosomal subunit protein uL24.